We begin with the raw amino-acid sequence, 410 residues long: Interleukin-1 receptor type 2 (410 aa).

The N-terminal stretch at 1 to 13 (MFILLVLVTGVSA) is a signal peptide. The Extracellular portion of the chain corresponds to 14–355 (FTTPTVVHTG…SQSLHTTVKE (342 aa)). Ig-like C2-type domains are found at residues 35-136 (PTVH…VELK), 146-237 (PHVS…RNIE), and 249-357 (PVII…KEVS). 3 disulfides stabilise this stretch: C42/C128, C64/C120, and C164/C219. Residues N124, N208, N231, and N289 are each glycosylated (N-linked (GlcNAc...) asparagine). A disulfide bridge connects residues C270 and C338. The helical transmembrane segment at 356–381 (VSSTFSWSIALAPLSLIILVVGAIWM) threads the bilayer. At 382 to 410 (RRRCKRRAGKTYGLTKLRTDNQDFPSSPN) the chain is on the cytoplasmic side.

It belongs to the interleukin-1 receptor family. As to quaternary structure, associates with IL1RAP to form a non-signaling interleukin-1 receptor complex. A soluble form (sIL1R2) can also be produced by proteolytic cleavage at the cell surface (shedding) involving a metalloproteinase. As to expression, strongly expressed in B-cells, with levels 21 times higher than IL1R1. In T-cells expressed 5 times more compared with IL1R1.

The protein localises to the membrane. It is found in the cell membrane. The protein resides in the secreted. Its function is as follows. Non-signaling receptor for IL1A, IL1B and IL1RN. Reduces IL1B activities. Serves as a decoy receptor by competitive binding to IL1B and preventing its binding to IL1R1. Also modulates cellular response through non-signaling association with IL1RAP after binding to IL1B. IL1R2 (membrane and secreted forms) preferentially binds IL1B and poorly IL1A and IL1RN. The secreted IL1R2 recruits secreted IL1RAP with high affinity; this complex formation may be the dominant mechanism for neutralization of IL1B by secreted/soluble receptors. The protein is Interleukin-1 receptor type 2 (Il1r2) of Mus musculus (Mouse).